Here is an 82-residue protein sequence, read N- to C-terminus: Small ribosomal subunit protein bS18 (82 aa).

The protein belongs to the bacterial ribosomal protein bS18 family. As to quaternary structure, part of the 30S ribosomal subunit. Forms a tight heterodimer with protein bS6.

Functionally, binds as a heterodimer with protein bS6 to the central domain of the 16S rRNA, where it helps stabilize the platform of the 30S subunit. The polypeptide is Small ribosomal subunit protein bS18 (Chlamydia pneumoniae (Chlamydophila pneumoniae)).